The sequence spans 347 residues: MDSFFSTYVLPAIIMIGQSLLLLVCLLVFIAYVLLADRKIWAAVQLRRGPNVVGPFGLFQSFADLLKFVFKEPIIPAGANKAVFLLAPLVTVLLALSTWAVVPLADGWVIANINVGILYIFAISSLEVYGIIMGGWASNSKYPFLGALRSAAQMVSYEVSIGFVIVTVLLCVGSLNLTDIVNAQHTGLGTVLGLPASFLDWHWLSLFPMFIVFFISALAETNRPPFDLPEAESELVAGFMVEYGSSPYMMFMLGEYAAVCLMCALTTILFLGGWLPPVDIWILNWVPGIIWFTLKACLVFFMFAMVKAFVPRYRYDQLMRLGWKVFLPLSLAMVIIVAFVLKLMGWA.

Transmembrane regions (helical) follow at residues 13 to 33 (IIMIGQSLLLLVCLLVFIAYV), 50 to 70 (PNVVGPFGLFQSFADLLKFVF), 82 to 102 (AVFLLAPLVTVLLALSTWAVV), 115 to 135 (VGILYIFAISSLEVYGIIMGG), 161 to 181 (IGFVIVTVLLCVGSLNLTDIV), 198 to 218 (FLDWHWLSLFPMFIVFFISAL), 263 to 283 (CALTTILFLGGWLPPVDIWIL), 286 to 306 (VPGIIWFTLKACLVFFMFAMV), and 321 to 341 (LGWKVFLPLSLAMVIIVAFVL).

This sequence belongs to the complex I subunit 1 family. NDH-1 is composed of 14 different subunits. Subunits NuoA, H, J, K, L, M, N constitute the membrane sector of the complex.

The protein resides in the cell inner membrane. The enzyme catalyses a quinone + NADH + 5 H(+)(in) = a quinol + NAD(+) + 4 H(+)(out). NDH-1 shuttles electrons from NADH, via FMN and iron-sulfur (Fe-S) centers, to quinones in the respiratory chain. The immediate electron acceptor for the enzyme in this species is believed to be ubiquinone. Couples the redox reaction to proton translocation (for every two electrons transferred, four hydrogen ions are translocated across the cytoplasmic membrane), and thus conserves the redox energy in a proton gradient. This subunit may bind ubiquinone. The polypeptide is NADH-quinone oxidoreductase subunit H 1 (Rhizobium etli (strain ATCC 51251 / DSM 11541 / JCM 21823 / NBRC 15573 / CFN 42)).